The primary structure comprises 309 residues: Ribonuclease Z (309 aa).

Residues histidine 63, histidine 65, aspartate 67, histidine 68, histidine 145, aspartate 216, and histidine 274 each coordinate Zn(2+). Residue aspartate 67 is the Proton acceptor of the active site.

This sequence belongs to the RNase Z family. Homodimer. Zn(2+) serves as cofactor.

It carries out the reaction Endonucleolytic cleavage of RNA, removing extra 3' nucleotides from tRNA precursor, generating 3' termini of tRNAs. A 3'-hydroxy group is left at the tRNA terminus and a 5'-phosphoryl group is left at the trailer molecule.. In terms of biological role, zinc phosphodiesterase, which displays some tRNA 3'-processing endonuclease activity. Probably involved in tRNA maturation, by removing a 3'-trailer from precursor tRNA. This chain is Ribonuclease Z, found in Streptococcus equi subsp. zooepidemicus (strain H70).